We begin with the raw amino-acid sequence, 362 residues long: Homeobox protein extradenticle (362 aa).

The PBC domain occupies 34-225; the sequence is PRKQDIGEIL…VMILRSRFLD (192 aa). A PBC-A region spans residues 41–120; sequence EILQQIMNIT…EGVAGPEKGG (80 aa). The PBC-B stretch occupies residues 123–225; sequence DFLSQSDLTG…VMILRSRFLD (103 aa). Positions 226 to 288 form a DNA-binding region, homeobox; TALE-type; it reads ARRKRRNFSK…NKRIRYKKNI (63 aa). Residues 305 to 362 are disordered; the sequence is GASPYSMGGPPSGAATPMMSPAPAQDSMGYSLGSGGYDQQQPYDGSMGYDQLHQDLSP.

This sequence belongs to the TALE/PBX homeobox family.

It is found in the nucleus. Functionally, transcription factor which acts with the selector homeodomain proteins altering the regulation of downstream target genes such as wingless (wg), teashirt (tsh) and decapentaplegic (dpp), thus affecting segmental identity. This Anopheles gambiae (African malaria mosquito) protein is Homeobox protein extradenticle.